Reading from the N-terminus, the 155-residue chain is Prespore-specific protein E (155 aa).

An N-terminal signal peptide occupies residues 1–20 (MRFISIFLIIVALCVSSSWA). Asn22, Asn82, Asn85, and Asn102 each carry an N-linked (GlcNAc...) asparagine glycan. The O-linked (GlcNAc) serine glycan is linked to Ser105. Asn133 carries the GPI-like-anchor amidated asparagine lipid modification. Residues 134–155 (SADKVAVGIAIIFGALISLLAL) constitute a propeptide, removed in mature form.

Post-translationally, the GPI-like-anchor contains a phosphoceramide group, rather than a phosphatidyl group.

It localises to the cell membrane. This Dictyostelium discoideum (Social amoeba) protein is Prespore-specific protein E (pspE).